Reading from the N-terminus, the 311-residue chain is HPr kinase/phosphorylase (311 aa).

Residues His-138 and Lys-159 contribute to the active site. 153–160 (GDSGIGKS) contacts ATP. Ser-160 lines the Mg(2+) pocket. The active-site Proton acceptor; for phosphorylation activity. Proton donor; for dephosphorylation activity is Asp-177. The interval 201–210 (IEIRGVGIID) is important for the catalytic mechanism of both phosphorylation and dephosphorylation. Mg(2+) is bound at residue Glu-202. Arg-243 is an active-site residue. Residues 264 to 269 (PVKTGR) are important for the catalytic mechanism of dephosphorylation.

The protein belongs to the HPrK/P family. Homohexamer. It depends on Mg(2+) as a cofactor.

It carries out the reaction [HPr protein]-L-serine + ATP = [HPr protein]-O-phospho-L-serine + ADP + H(+). It catalyses the reaction [HPr protein]-O-phospho-L-serine + phosphate + H(+) = [HPr protein]-L-serine + diphosphate. In terms of biological role, catalyzes the ATP- as well as the pyrophosphate-dependent phosphorylation of a specific serine residue in HPr, a phosphocarrier protein of the phosphoenolpyruvate-dependent sugar phosphotransferase system (PTS). HprK/P also catalyzes the pyrophosphate-producing, inorganic phosphate-dependent dephosphorylation (phosphorolysis) of seryl-phosphorylated HPr (P-Ser-HPr). The two antagonistic activities of HprK/P are regulated by several intracellular metabolites, which change their concentration in response to the absence or presence of rapidly metabolisable carbon sources (glucose, fructose, etc.) in the growth medium. Therefore, by controlling the phosphorylation state of HPr, HPrK/P is a sensor enzyme that plays a major role in the regulation of carbon metabolism and sugar transport: it mediates carbon catabolite repression (CCR), and regulates PTS-catalyzed carbohydrate uptake and inducer exclusion. In Streptococcus pneumoniae serotype 2 (strain D39 / NCTC 7466), this protein is HPr kinase/phosphorylase.